The primary structure comprises 124 residues: Competence protein ComGG (124 aa).

The signal sequence occupies residues 1–28 (MYRTRGFIYPAVLFVSALVLLIVNFVAA).

As to quaternary structure, the transformation pili are flexible filaments, consisting mainly of the major pilin ComGC and smaller amounts of the minor pilins, including at least ComGD, ComGF and ComGG. Interacts with ComGC; the interaction is probably direct. Interacts with ComGD. Interacts with ComGF. May act as a link between ComGC, ComGD and ComGF. Homodimer; disulfide-linked. A minor fraction of ComGG is found as a disulfide-bonded homodimer. Post-translationally, partial processing of ComGG in competent cells requires ComC.

It localises to the cell membrane. It is found in the secreted. Required for formation of the type IV-like pilus (T4P) that plays a role in transformation. Transformation pili are dynamically extended and retracted, perhaps thereby promoting DNA uptake and transformation. Required for transformation and DNA binding. This chain is Competence protein ComGG (comGG), found in Bacillus subtilis (strain 168).